A 732-amino-acid polypeptide reads, in one-letter code: Protein kinase YpkA (732 aa).

The Protein kinase domain occupies 136–408 (VAETDKFAEG…SNEARLHEFL (273 aa)). ATP is bound by residues 142 to 150 (FAEGESHIS) and K163. D270 serves as the catalytic Proton acceptor.

The protein belongs to the protein kinase superfamily. Ser/Thr protein kinase family.

Its subcellular location is the secreted. The catalysed reaction is L-seryl-[protein] + ATP = O-phospho-L-seryl-[protein] + ADP + H(+). It carries out the reaction L-threonyl-[protein] + ATP = O-phospho-L-threonyl-[protein] + ADP + H(+). In terms of biological role, acts as a virulence determinant. This chain is Protein kinase YpkA (ypkA), found in Yersinia pestis.